Consider the following 250-residue polypeptide: 3-deoxy-manno-octulosonate cytidylyltransferase (250 aa).

The protein belongs to the KdsB family.

It is found in the cytoplasm. The enzyme catalyses 3-deoxy-alpha-D-manno-oct-2-ulosonate + CTP = CMP-3-deoxy-beta-D-manno-octulosonate + diphosphate. It participates in nucleotide-sugar biosynthesis; CMP-3-deoxy-D-manno-octulosonate biosynthesis; CMP-3-deoxy-D-manno-octulosonate from 3-deoxy-D-manno-octulosonate and CTP: step 1/1. Its pathway is bacterial outer membrane biogenesis; lipopolysaccharide biosynthesis. Its function is as follows. Activates KDO (a required 8-carbon sugar) for incorporation into bacterial lipopolysaccharide in Gram-negative bacteria. This is 3-deoxy-manno-octulosonate cytidylyltransferase from Legionella pneumophila subsp. pneumophila (strain Philadelphia 1 / ATCC 33152 / DSM 7513).